A 300-amino-acid polypeptide reads, in one-letter code: Mycothiol acetyltransferase (300 aa).

N-acetyltransferase domains are found at residues 4–140 and 151–300; these read IDWR…RPLT and VRLA…AVAD. Asp36 provides a ligand contact to 1D-myo-inositol 2-(L-cysteinylamino)-2-deoxy-alpha-D-glucopyranoside. Residue 79–81 coordinates acetyl-CoA; sequence LVV. 1D-myo-inositol 2-(L-cysteinylamino)-2-deoxy-alpha-D-glucopyranoside-binding residues include Glu178, Lys219, and Glu227. An acetyl-CoA-binding site is contributed by 231–233; it reads VGV. Tyr269 is a binding site for 1D-myo-inositol 2-(L-cysteinylamino)-2-deoxy-alpha-D-glucopyranoside. 274 to 279 is an acetyl-CoA binding site; the sequence is NGAAVK.

Belongs to the acetyltransferase family. MshD subfamily. Monomer.

The catalysed reaction is 1D-myo-inositol 2-(L-cysteinylamino)-2-deoxy-alpha-D-glucopyranoside + acetyl-CoA = mycothiol + CoA + H(+). Catalyzes the transfer of acetyl from acetyl-CoA to desacetylmycothiol (Cys-GlcN-Ins) to form mycothiol. The sequence is that of Mycothiol acetyltransferase from Mycobacterium sp. (strain MCS).